A 557-amino-acid polypeptide reads, in one-letter code: D-arabinono-1,4-lactone oxidase (557 aa).

The FAD-binding PCMH-type domain maps to 25–209; it reads FLCKPQAIFQ…THVTLRTCPK (185 aa). FAD contacts are provided by residues 58-61, 62-63, 144-148, isoleucine 199, and 543-546; these read VGSG, HS, ISTGT, and LSGK. A Pros-8alpha-FAD histidine modification is found at histidine 62.

The protein belongs to the oxygen-dependent FAD-linked oxidoreductase family. FAD serves as cofactor.

It carries out the reaction D-arabinono-1,4-lactone + O2 = dehydro-D-arabinono-1,4-lactone + H2O2 + H(+). The enzyme catalyses L-galactono-1,4-lactone + O2 = L-ascorbate + H2O2 + H(+). The catalysed reaction is L-gulono-1,4-lactone + O2 = L-ascorbate + H2O2 + H(+). It catalyses the reaction L-xylono-1,4-lactone + O2 = dehydro-L-arabinono-1,4-lactone + H2O2 + H(+). Its pathway is cofactor biosynthesis; D-erythroascorbate biosynthesis; dehydro-D-arabinono-1,4-lactone from D-arabinose: step 2/2. D-arabinono-1,4-lactone oxidase that catalyzes the final step of biosynthesis of D-erythroascorbic acid, an important antioxidant and one of the virulence factors enhancing the pathogenicity. Is also able to oxidize L-galactono-1,4-lactone, L-xylono-1,4-lactone and L-gulono-1,4-lactone. In Candida albicans (strain SC5314 / ATCC MYA-2876) (Yeast), this protein is D-arabinono-1,4-lactone oxidase.